Reading from the N-terminus, the 257-residue chain is Cytochrome c oxidase subunit 3 (257 aa).

The next 6 helical transmembrane spans lie at 13 to 33 (PWPITSSISALSLTLGFVSYF), 36 to 56 (LSMYLILLAVLMITISSFQWW), 80 to 100 (GMILFILSEVFFFVSFFWAFF), 154 to 174 (YISALNSLLITILLGVAFTMF), 195 to 215 (FFMTTGFHGLHVLIGSIFLLV), and 237 to 257 (AWYWHFVDVVWLFLFTFMYWW).

The protein belongs to the cytochrome c oxidase subunit 3 family. In terms of assembly, component of the cytochrome c oxidase (complex IV, CIV), a multisubunit enzyme composed of a catalytic core of 3 subunits and several supernumerary subunits. The complex exists as a monomer or a dimer and forms supercomplexes (SCs) in the inner mitochondrial membrane with ubiquinol-cytochrome c oxidoreductase (cytochrome b-c1 complex, complex III, CIII).

It localises to the mitochondrion inner membrane. The enzyme catalyses 4 Fe(II)-[cytochrome c] + O2 + 8 H(+)(in) = 4 Fe(III)-[cytochrome c] + 2 H2O + 4 H(+)(out). Component of the cytochrome c oxidase, the last enzyme in the mitochondrial electron transport chain which drives oxidative phosphorylation. The respiratory chain contains 3 multisubunit complexes succinate dehydrogenase (complex II, CII), ubiquinol-cytochrome c oxidoreductase (cytochrome b-c1 complex, complex III, CIII) and cytochrome c oxidase (complex IV, CIV), that cooperate to transfer electrons derived from NADH and succinate to molecular oxygen, creating an electrochemical gradient over the inner membrane that drives transmembrane transport and the ATP synthase. Cytochrome c oxidase is the component of the respiratory chain that catalyzes the reduction of oxygen to water. Electrons originating from reduced cytochrome c in the intermembrane space (IMS) are transferred via the dinuclear copper A center (CU(A)) of subunit 2 and heme A of subunit 1 to the active site in subunit 1, a binuclear center (BNC) formed by heme A3 and copper B (CU(B)). The BNC reduces molecular oxygen to 2 water molecules using 4 electrons from cytochrome c in the IMS and 4 protons from the mitochondrial matrix. This Rhipicephalus sanguineus (Brown dog tick) protein is Cytochrome c oxidase subunit 3 (COIII).